A 383-amino-acid chain; its full sequence is L-lactate dehydrogenase (383 aa).

The 380-residue stretch at 1–380 (MIISSGNDYR…NADCLVQAIK (380 aa)) folds into the FMN hydroxy acid dehydrogenase domain. Tyrosine 24 provides a ligand contact to substrate. FMN contacts are provided by serine 106 and glutamine 127. Tyrosine 129 is a substrate binding site. Threonine 155 serves as a coordination point for FMN. Arginine 164 is a binding site for substrate. Position 251 (lysine 251) interacts with FMN. Histidine 275 serves as the catalytic Proton acceptor. A substrate-binding site is contributed by arginine 278. 306-330 (DSGIRNGLDVVRMLALGADTVLLGR) provides a ligand contact to FMN.

Belongs to the FMN-dependent alpha-hydroxy acid dehydrogenase family. FMN is required as a cofactor.

It is found in the cell inner membrane. It catalyses the reaction (S)-lactate + A = pyruvate + AH2. Its function is as follows. Catalyzes the conversion of L-lactate to pyruvate. Is coupled to the respiratory chain. The protein is L-lactate dehydrogenase of Acinetobacter baumannii (strain AB307-0294).